The following is a 267-amino-acid chain: Hydroxyethylthiazole kinase (267 aa).

M46 contributes to the substrate binding site. The ATP site is built by R122 and S168. Residue G195 participates in substrate binding.

The protein belongs to the Thz kinase family. Mg(2+) serves as cofactor.

It catalyses the reaction 5-(2-hydroxyethyl)-4-methylthiazole + ATP = 4-methyl-5-(2-phosphooxyethyl)-thiazole + ADP + H(+). It functions in the pathway cofactor biosynthesis; thiamine diphosphate biosynthesis; 4-methyl-5-(2-phosphoethyl)-thiazole from 5-(2-hydroxyethyl)-4-methylthiazole: step 1/1. In terms of biological role, catalyzes the phosphorylation of the hydroxyl group of 4-methyl-5-beta-hydroxyethylthiazole (THZ). The chain is Hydroxyethylthiazole kinase from Nitratidesulfovibrio vulgaris (strain DP4) (Desulfovibrio vulgaris).